The following is a 282-amino-acid chain: Probable endonuclease 4 (282 aa).

9 residues coordinate Zn(2+): His69, His109, Glu145, Asp179, His182, His216, Asp229, His231, and Glu261.

This sequence belongs to the AP endonuclease 2 family. Zn(2+) is required as a cofactor.

It catalyses the reaction Endonucleolytic cleavage to 5'-phosphooligonucleotide end-products.. Endonuclease IV plays a role in DNA repair. It cleaves phosphodiester bonds at apurinic or apyrimidinic (AP) sites, generating a 3'-hydroxyl group and a 5'-terminal sugar phosphate. This Chlorobium chlorochromatii (strain CaD3) protein is Probable endonuclease 4.